A 257-amino-acid chain; its full sequence is MQTMTIKEAENVLKEIMNEEDDRFQLLMKDDRKGVQKLVLKWYKQKELEQKEKEKFFEMSKYENALREKGITYIAGIDEVGRGPLAGPVVTAAVVLPEDFYIPGLNDSKKLSEAKRERFYDEIKVQAIAIGVGIVSPQVIDDINIYQATKQAMLDAVANLSCTPQHLLIDAMKLPTPIPQTSIIKGDAKSVSISAASIIAKVTRDRMMKELGEKYPEYGFEQHMGYGTKQHLEAIEVHGVLDEHRKSFAPIKDMIQK.

The region spanning 72-257 (TYIAGIDEVG…FAPIKDMIQK (186 aa)) is the RNase H type-2 domain. 3 residues coordinate a divalent metal cation: D78, E79, and D170.

This sequence belongs to the RNase HII family. Requires Mn(2+) as cofactor. The cofactor is Mg(2+).

Its subcellular location is the cytoplasm. The enzyme catalyses Endonucleolytic cleavage to 5'-phosphomonoester.. Its function is as follows. Endonuclease that specifically degrades the RNA of RNA-DNA hybrids. This chain is Ribonuclease HII, found in Bacillus cereus (strain B4264).